A 257-amino-acid chain; its full sequence is UPF0246 protein lpg1366 (257 aa).

The protein belongs to the UPF0246 family.

The protein is UPF0246 protein lpg1366 of Legionella pneumophila subsp. pneumophila (strain Philadelphia 1 / ATCC 33152 / DSM 7513).